An 867-amino-acid polypeptide reads, in one-letter code: GRB2-associated and regulator of MAPK protein 1 (867 aa).

Residues Asn12–Glu322 are CABIT. Phosphotyrosine is present on Tyr464. Disordered stretches follow at residues Ser511–Glu530, Asp536–Ser594, and Pro735–Ala758. Composition is skewed to polar residues over residues Ser544–Thr554 and Ser569–Leu581. Over residues Lys740–Glu749 the composition is skewed to basic and acidic residues. In terms of domain architecture, SAM spans Ile802–Met867.

It belongs to the GAREM family.

Its function is as follows. Adapter protein that may provide a link between cell surface epidermal growth factor receptor and the MAPK/ERK signaling pathway. May promote cell proliferation. This is GRB2-associated and regulator of MAPK protein 1 (garem1) from Danio rerio (Zebrafish).